Here is a 216-residue protein sequence, read N- to C-terminus: Pyrophosphatase PpaX (216 aa).

Catalysis depends on aspartate 12, which acts as the Nucleophile.

This sequence belongs to the HAD-like hydrolase superfamily. PpaX family. Mg(2+) is required as a cofactor.

The enzyme catalyses diphosphate + H2O = 2 phosphate + H(+). Its function is as follows. Hydrolyzes pyrophosphate formed during P-Ser-HPr dephosphorylation by HPrK/P. Might play a role in controlling the intracellular pyrophosphate pool. The sequence is that of Pyrophosphatase PpaX from Bacillus velezensis (strain DSM 23117 / BGSC 10A6 / LMG 26770 / FZB42) (Bacillus amyloliquefaciens subsp. plantarum).